We begin with the raw amino-acid sequence, 237 residues long: Orotidine 5'-phosphate decarboxylase (237 aa).

Substrate contacts are provided by residues Asp11, Lys34, 61–70 (DLKLHDIPNT), Thr123, Arg185, Gln194, Gly214, and Arg215. Lys63 serves as the catalytic Proton donor.

Belongs to the OMP decarboxylase family. Type 1 subfamily. Homodimer.

It catalyses the reaction orotidine 5'-phosphate + H(+) = UMP + CO2. It functions in the pathway pyrimidine metabolism; UMP biosynthesis via de novo pathway; UMP from orotate: step 2/2. Functionally, catalyzes the decarboxylation of orotidine 5'-monophosphate (OMP) to uridine 5'-monophosphate (UMP). The protein is Orotidine 5'-phosphate decarboxylase of Ligilactobacillus salivarius (strain UCC118) (Lactobacillus salivarius).